The chain runs to 1371 residues: DNA-directed RNA polymerase subunit beta' (1371 aa).

Zn(2+) is bound by residues C71, C73, C86, and C89. Mg(2+) is bound by residues D461, D463, and D465. Residues C803, C877, C884, and C887 each contribute to the Zn(2+) site.

This sequence belongs to the RNA polymerase beta' chain family. The RNAP catalytic core consists of 2 alpha, 1 beta, 1 beta' and 1 omega subunit. When a sigma factor is associated with the core the holoenzyme is formed, which can initiate transcription. Mg(2+) is required as a cofactor. It depends on Zn(2+) as a cofactor.

It catalyses the reaction RNA(n) + a ribonucleoside 5'-triphosphate = RNA(n+1) + diphosphate. DNA-dependent RNA polymerase catalyzes the transcription of DNA into RNA using the four ribonucleoside triphosphates as substrates. The polypeptide is DNA-directed RNA polymerase subunit beta' (Thermodesulfovibrio yellowstonii (strain ATCC 51303 / DSM 11347 / YP87)).